Reading from the N-terminus, the 451-residue chain is Phosphoglucosamine mutase (451 aa).

Ser-103 acts as the Phosphoserine intermediate in catalysis. Mg(2+) contacts are provided by Ser-103, Asp-243, Asp-245, and Asp-247. A Phosphoserine modification is found at Ser-103.

Belongs to the phosphohexose mutase family. Mg(2+) is required as a cofactor. In terms of processing, activated by phosphorylation.

The catalysed reaction is alpha-D-glucosamine 1-phosphate = D-glucosamine 6-phosphate. Functionally, catalyzes the conversion of glucosamine-6-phosphate to glucosamine-1-phosphate. In Levilactobacillus brevis (strain ATCC 367 / BCRC 12310 / CIP 105137 / JCM 1170 / LMG 11437 / NCIMB 947 / NCTC 947) (Lactobacillus brevis), this protein is Phosphoglucosamine mutase.